The following is a 232-amino-acid chain: Large ribosomal subunit protein uL1 (232 aa).

This sequence belongs to the universal ribosomal protein uL1 family. In terms of assembly, part of the 50S ribosomal subunit.

Binds directly to 23S rRNA. The L1 stalk is quite mobile in the ribosome, and is involved in E site tRNA release. Its function is as follows. Protein L1 is also a translational repressor protein, it controls the translation of the L11 operon by binding to its mRNA. The chain is Large ribosomal subunit protein uL1 from Maricaulis maris (strain MCS10) (Caulobacter maris).